The primary structure comprises 208 residues: Methylthioribulose-1-phosphate dehydratase (208 aa).

Positions 96 and 98 each coordinate Zn(2+).

This sequence belongs to the aldolase class II family. MtnB subfamily. The cofactor is Zn(2+).

It carries out the reaction 5-(methylsulfanyl)-D-ribulose 1-phosphate = 5-methylsulfanyl-2,3-dioxopentyl phosphate + H2O. It functions in the pathway amino-acid biosynthesis; L-methionine biosynthesis via salvage pathway; L-methionine from S-methyl-5-thio-alpha-D-ribose 1-phosphate: step 2/6. Functionally, catalyzes the dehydration of methylthioribulose-1-phosphate (MTRu-1-P) into 2,3-diketo-5-methylthiopentyl-1-phosphate (DK-MTP-1-P). The protein is Methylthioribulose-1-phosphate dehydratase of Pseudomonas fluorescens (strain Pf0-1).